Consider the following 463-residue polypeptide: Cysteine--tRNA ligase (463 aa).

C29 serves as a coordination point for Zn(2+). The short motif at 31 to 41 (PTVYDFAHIGN) is the 'HIGH' region element. Zn(2+)-binding residues include C227, H252, and E256. The short motif at 285 to 289 (KMSKS) is the 'KMSKS' region element. K288 contacts ATP.

This sequence belongs to the class-I aminoacyl-tRNA synthetase family. In terms of assembly, monomer. Zn(2+) is required as a cofactor.

It localises to the cytoplasm. It catalyses the reaction tRNA(Cys) + L-cysteine + ATP = L-cysteinyl-tRNA(Cys) + AMP + diphosphate. This chain is Cysteine--tRNA ligase, found in Rhodopseudomonas palustris (strain ATCC BAA-98 / CGA009).